Consider the following 687-residue polypeptide: Light-independent protochlorophyllide reductase subunit B (687 aa).

Residue Asp36 participates in [4Fe-4S] cluster binding. Asp441 serves as the catalytic Proton donor. 576–577 serves as a coordination point for substrate; that stretch reads GM.

Belongs to the ChlB/BchB/BchZ family. In terms of assembly, protochlorophyllide reductase is composed of three subunits; ChlL, ChlN and ChlB. Forms a heterotetramer of two ChlB and two ChlN subunits. [4Fe-4S] cluster serves as cofactor.

It is found in the plastid. It localises to the chloroplast. The enzyme catalyses chlorophyllide a + oxidized 2[4Fe-4S]-[ferredoxin] + 2 ADP + 2 phosphate = protochlorophyllide a + reduced 2[4Fe-4S]-[ferredoxin] + 2 ATP + 2 H2O. It participates in porphyrin-containing compound metabolism; chlorophyll biosynthesis (light-independent). Its function is as follows. Component of the dark-operative protochlorophyllide reductase (DPOR) that uses Mg-ATP and reduced ferredoxin to reduce ring D of protochlorophyllide (Pchlide) to form chlorophyllide a (Chlide). This reaction is light-independent. The NB-protein (ChlN-ChlB) is the catalytic component of the complex. This chain is Light-independent protochlorophyllide reductase subunit B, found in Chlamydomonas reinhardtii (Chlamydomonas smithii).